Here is a 3739-residue protein sequence, read N- to C-terminus: Pikromycin polyketide synthase component PikAII (3739 aa).

The Ketosynthase family 3 (KS3) 1 domain occupies glycine 35–glutamate 463. Module stretches follow at residues valine 38–leucine 1517 and valine 1542–leucine 3642. Cysteine 208 acts as the Acyl-thioester intermediate; for beta-ketoacyl synthase 1 activity in catalysis. Catalysis depends on for beta-ketoacyl synthase 1 activity residues histidine 343 and histidine 383. The interval phenylalanine 572–alanine 877 is acyltransferase 1. Serine 662 functions as the Acyl-ester intermediate; for acyltransferase 1 activity in the catalytic mechanism. The tract at residues glycine 1150–glutamate 1343 is C2-type beta-ketoacyl reductase 1. Tyrosine 1313 serves as the catalytic For C2-type beta-ketoacyl reductase 1 and probable racemase activities. Residues arginine 1445 to isoleucine 1520 enclose the Carrier 1 domain. Serine 1480 bears the O-(pantetheine 4'-phosphoryl)serine mark. The Ketosynthase family 3 (KS3) 2 domain maps to aspartate 1539–glutamate 1967. Catalysis depends on cysteine 1712, which acts as the Acyl-thioester intermediate; for beta-ketoacyl synthase 2 activity. Residues histidine 1847 and histidine 1887 each act as for beta-ketoacyl synthase 2 activity in the active site. Residues phenylalanine 2069 to alanine 2374 form an acyltransferase 2 region. Residue serine 2159 is the Acyl-ester intermediate; for acyltransferase 2 activity of the active site. The N-terminal hotdog fold stretch occupies residues histidine 2428–threonine 2553. Residues histidine 2428 to glutamine 2703 form a dehydratase region. Residues histidine 2428–alanine 2705 form the PKS/mFAS DH domain. Catalysis depends on histidine 2460, which acts as the Proton acceptor; for dehydratase activity. A C-terminal hotdog fold region spans residues alanine 2567–alanine 2705. Aspartate 2629 (proton donor; for dehydratase activity) is an active-site residue. The interval glycine 2959–leucine 3267 is enoyl reductase. Tyrosine 3005 (for enoyl reductase activity) is an active-site residue. Residues leucine 3092–alanine 3109, threonine 3285–leucine 3288, serine 3309–glycine 3312, aspartate 3338–valine 3339, lysine 3388, and phenylalanine 3412–serine 3413 contribute to the NADP(+) site. Residues glycine 3277–glutamate 3458 are beta-ketoacyl reductase 2. The active-site For beta-ketoacyl reductase 2 activity is tyrosine 3427. The 76-residue stretch at alanine 3570 to leucine 3645 folds into the Carrier 2 domain. Serine 3605 carries the O-(pantetheine 4'-phosphoryl)serine modification.

In terms of assembly, homodimer. Pikromycin PKS consists of a combination of multimodular (PikAI and PikAII) and monomodular (PikAIII and PikAIV) polypeptides each coding for a functional synthase subunit which participates in 1 (monomodular) or 2 (multimodular) of the six FAS-like elongation steps required for formation of the polyketide. Module 1, 2, 3, 4, 5, and 6 participating in biosynthesis steps 1, 2, 3, 4, 5, and 6, respectively. Pantetheine 4'-phosphate serves as cofactor.

The enzyme catalyses 5 (S)-methylmalonyl-CoA + malonyl-CoA + 5 NADPH + 11 H(+) = 10-deoxymethynolide + 6 CO2 + 5 NADP(+) + 6 CoA + 2 H2O. The catalysed reaction is 6 (S)-methylmalonyl-CoA + malonyl-CoA + 5 NADPH + 12 H(+) = narbonolide + 7 CO2 + 5 NADP(+) + 7 CoA + 2 H2O. It participates in antibiotic biosynthesis. Functionally, involved in the biosynthesis of 12- and 14-membered ring macrolactone antibiotics such as methymycin/neomethymycin and pikromycin/narbomycin, respectively. Component of the pikromycin PKS which catalyzes the biosynthesis of both precursors 10-deoxymethynolide (12-membered ring macrolactone) and narbonolide (14-membered ring macrolactone). Chain elongation through PikAI, PikAII and PikAIII followed by thioesterase catalyzed termination results in the production of 10-deoxymethynolide, while continued elongation through PikAIV, followed by thioesterase (TE) catalyzed cyclization results in the biosynthesis of the narbonolide. This Streptomyces venezuelae protein is Pikromycin polyketide synthase component PikAII.